A 217-amino-acid polypeptide reads, in one-letter code: 7-cyano-7-deazaguanine synthase (217 aa).

10-20 lines the ATP pocket; the sequence is FSGGQDSTTCL. Residues Cys-185, Cys-194, Cys-197, and Cys-200 each coordinate Zn(2+).

This sequence belongs to the QueC family. In terms of assembly, homodimer. Zn(2+) is required as a cofactor.

It catalyses the reaction 7-carboxy-7-deazaguanine + NH4(+) + ATP = 7-cyano-7-deazaguanine + ADP + phosphate + H2O + H(+). It functions in the pathway purine metabolism; 7-cyano-7-deazaguanine biosynthesis. Its function is as follows. Catalyzes the ATP-dependent conversion of 7-carboxy-7-deazaguanine (CDG) to 7-cyano-7-deazaguanine (preQ(0)). This chain is 7-cyano-7-deazaguanine synthase, found in Streptococcus thermophilus (strain CNRZ 1066).